The sequence spans 226 residues: Putative integrase V10 (226 aa).

Active-site residues include arginine 97, histidine 174, and arginine 177. Tyrosine 210 acts as the O-(3'-phospho-DNA)-tyrosine intermediate in catalysis.

It belongs to the 'phage' integrase family.

May catalyze site-specific integration of viral genome into host or helper virus DNA. The sequence is that of Putative integrase V10 from Acanthamoeba polyphaga (Amoeba).